The following is a 113-amino-acid chain: uncharacterized protein (113 aa).

Its subcellular location is the mitochondrion. This is an uncharacterized protein from Paramecium tetraurelia.